The chain runs to 365 residues: Phosphopantothenate--cysteine ligase CAB2 (365 aa).

Residues 228–250 form a disordered region; sequence QSGDNGKMGANNDTEGTTRTTPD. Positions 238–248 are enriched in polar residues; it reads NNDTEGTTRTT.

The protein belongs to the PPC synthetase family. In terms of assembly, homodimer.

The protein localises to the cytoplasm. Its subcellular location is the nucleus. It catalyses the reaction (R)-4'-phosphopantothenate + L-cysteine + CTP = N-[(R)-4-phosphopantothenoyl]-L-cysteine + CMP + diphosphate + H(+). Its pathway is cofactor biosynthesis; coenzyme A biosynthesis; CoA from (R)-pantothenate: step 2/5. Functionally, catalyzes the first step in the biosynthesis of coenzyme A from vitamin B5, where cysteine is conjugated to 4'-phosphopantothenate to form 4-phosphopantothenoylcysteine. The polypeptide is Phosphopantothenate--cysteine ligase CAB2 (CAB2) (Saccharomyces cerevisiae (strain ATCC 204508 / S288c) (Baker's yeast)).